A 263-amino-acid polypeptide reads, in one-letter code: DNA repair protein RecO (263 aa).

The disordered stretch occupies residues 243 to 263 (DRKETARETVPTSDGTASNAV). Polar residues predominate over residues 252–263 (VPTSDGTASNAV).

It belongs to the RecO family.

Involved in DNA repair and RecF pathway recombination. This chain is DNA repair protein RecO, found in Neisseria meningitidis serogroup C / serotype 2a (strain ATCC 700532 / DSM 15464 / FAM18).